Reading from the N-terminus, the 434-residue chain is Histidinol dehydrogenase (434 aa).

The NAD(+) site is built by Tyr-130, Gln-188, and Asn-211. Substrate contacts are provided by Ser-237, Gln-259, and His-262. Zn(2+) contacts are provided by Gln-259 and His-262. Residues Glu-326 and His-327 each act as proton acceptor in the active site. The substrate site is built by His-327, Asp-360, Glu-414, and His-419. Asp-360 is a binding site for Zn(2+). His-419 provides a ligand contact to Zn(2+).

The protein belongs to the histidinol dehydrogenase family. In terms of assembly, homodimer. Zn(2+) serves as cofactor. The cofactor is Mn(2+).

The enzyme catalyses L-histidinol + 2 NAD(+) + H2O = L-histidine + 2 NADH + 3 H(+). It functions in the pathway amino-acid biosynthesis; L-histidine biosynthesis; L-histidine from 5-phospho-alpha-D-ribose 1-diphosphate: step 9/9. With respect to regulation, activity is lost when the metal is removed through urea denaturation or chelation, and can be regained by addition of metal. Catalyzes the sequential NAD-dependent oxidations of L-histidinol to L-histidinaldehyde and then to L-histidine. In Salmonella typhimurium (strain LT2 / SGSC1412 / ATCC 700720), this protein is Histidinol dehydrogenase (hisD).